We begin with the raw amino-acid sequence, 390 residues long: MIKNLSKPFKWFFQLEAASGLVLLIAAIIALVISNSSLSNLYFDTLNQYLFIGINDFGLKLSVHHWINDLLMAIFFFFVTLEIKREFIQGELSNLKKALLPIIGAVGGMVVPALVYVFINLGNSETLNGWAIPSATDIAFSLGILSLLGSRVPISLKVFLTALAIIDDLGAILIIAFFYSGDLSISYLSLILISYILLLTLNKFGVKKFIPYLIIGAFMWFFTYKSGIHATIAGVLLASTIPHRIKEKDFSLLIKLEHAISPYVAFIIMPIFAFANAGVSLEGLSLTSLLEPVPLGILLGLFVGKQVGVMVVSFIAVKFGVAQMPDKSSWLSLYGVSILTGVGFTMSLFVGNLAFAENIQYIDGVKIGVLAGSLLSTVFGYFILLYASKK.

11 helical membrane passes run 13-33, 61-81, 99-119, 129-149, 158-178, 181-201, 209-229, 259-279, 297-317, 330-350, and 367-387; these read FQLE…ALVI, LSVH…FVTL, LLPI…YVFI, GWAI…SLLG, VFLT…IAFF, GDLS…LLTL, FIPY…SGIH, AISP…NAGV, ILLG…FIAV, WLSL…SLFV, and IGVL…LLYA.

Belongs to the NhaA Na(+)/H(+) (TC 2.A.33) antiporter family.

The protein resides in the cell inner membrane. The enzyme catalyses Na(+)(in) + 2 H(+)(out) = Na(+)(out) + 2 H(+)(in). Its function is as follows. Na(+)/H(+) antiporter that extrudes sodium in exchange for external protons. This Pelagibacter ubique (strain HTCC1062) protein is Na(+)/H(+) antiporter NhaA.